A 482-amino-acid chain; its full sequence is ATP synthase subunit beta (482 aa).

ATP is bound at residue 161–168 (GGAGVGKT).

This sequence belongs to the ATPase alpha/beta chains family. In terms of assembly, F-type ATPases have 2 components, CF(1) - the catalytic core - and CF(0) - the membrane proton channel. CF(1) has five subunits: alpha(3), beta(3), gamma(1), delta(1), epsilon(1). CF(0) has four main subunits: a(1), b(1), b'(1) and c(9-12).

It is found in the cellular thylakoid membrane. It carries out the reaction ATP + H2O + 4 H(+)(in) = ADP + phosphate + 5 H(+)(out). Functionally, produces ATP from ADP in the presence of a proton gradient across the membrane. The catalytic sites are hosted primarily by the beta subunits. This chain is ATP synthase subunit beta, found in Gloeothece citriformis (strain PCC 7424) (Cyanothece sp. (strain PCC 7424)).